Reading from the N-terminus, the 622-residue chain is Pentatricopeptide repeat-containing protein At5g06540 (622 aa).

10 PPR repeats span residues 81–115 (NLFV…RIWP), 116–150 (DNIT…GFQN), 151–181 (DVYV…MGFR), 182–212 (DVVS…MPHR), 213–247 (NLFT…GVVA), 248–282 (NETV…HMTV), 283–313 (NLIL…LPET), 314–348 (DSLS…GFIP), 349–384 (RDVT…GIEP), and 385–419 (RLEH…PNAP). A type E motif region spans residues 420–495 (ILGALLGACK…PPGWSLIEID (76 aa)). Residues 496 to 527 (GKINKFTMGDDQKHPEMGKIRRKWEEILGKIR) are type E(+) motif. The tract at residues 528 to 622 (LIGYKGNTGD…NGVCSCRDYW (95 aa)) is type DYW motif.

Belongs to the PPR family. PCMP-H subfamily.

In Arabidopsis thaliana (Mouse-ear cress), this protein is Pentatricopeptide repeat-containing protein At5g06540 (PCMP-H88).